We begin with the raw amino-acid sequence, 350 residues long: Formimidoylglutamase (350 aa).

Residues histidine 130, aspartate 165, histidine 167, aspartate 169, aspartate 269, and aspartate 271 each contribute to the Mn(2+) site.

The protein belongs to the arginase family. It depends on Mn(2+) as a cofactor.

It catalyses the reaction N-formimidoyl-L-glutamate + H2O = formamide + L-glutamate. It functions in the pathway amino-acid degradation; L-histidine degradation into L-glutamate; L-glutamate from N-formimidoyl-L-glutamate (hydrolase route): step 1/1. Catalyzes the conversion of N-formimidoyl-L-glutamate to L-glutamate and formamide. The protein is Formimidoylglutamase of Aliivibrio fischeri (strain ATCC 700601 / ES114) (Vibrio fischeri).